A 151-amino-acid chain; its full sequence is Small ribosomal subunit protein bS6 (151 aa).

The interval 94–151 is disordered; sequence EEHEQGPSAMMRKRDDDDRGERGERPRGPRPERGERGERGERGPRRPREDNIGEEGLY. The span at 105–144 shows a compositional bias: basic and acidic residues; sequence RKRDDDDRGERGERPRGPRPERGERGERGERGPRRPREDN.

It belongs to the bacterial ribosomal protein bS6 family.

Its function is as follows. Binds together with bS18 to 16S ribosomal RNA. This chain is Small ribosomal subunit protein bS6, found in Beijerinckia indica subsp. indica (strain ATCC 9039 / DSM 1715 / NCIMB 8712).